We begin with the raw amino-acid sequence, 543 residues long: Putative fatty acyl-CoA reductase CG8303 (543 aa).

Residues 1–29 (MAVITEHGGTTSSPPENNNSIGNGKHRVN) are disordered. The segment covering 8-22 (GGTTSSPPENNNSIG) has biased composition (polar residues). A run of 3 helical transmembrane segments spans residues 386-406 (LFFY…EKLF), 500-520 (VFNV…YFAL), and 522-542 (LTLG…FLVW).

Belongs to the fatty acyl-CoA reductase family.

The protein resides in the membrane. The catalysed reaction is a long-chain fatty acyl-CoA + 2 NADPH + 2 H(+) = a long-chain primary fatty alcohol + 2 NADP(+) + CoA. The enzyme catalyses hexadecanoyl-CoA + 2 NADPH + 2 H(+) = hexadecan-1-ol + 2 NADP(+) + CoA. It carries out the reaction octadecanoyl-CoA + 2 NADPH + 2 H(+) = octadecan-1-ol + 2 NADP(+) + CoA. In terms of biological role, catalyzes the reduction of C16 or C18 fatty acyl-CoA to fatty alcohols. In Drosophila melanogaster (Fruit fly), this protein is Putative fatty acyl-CoA reductase CG8303.